A 145-amino-acid polypeptide reads, in one-letter code: 3-hydroxyacyl-[acyl-carrier-protein] dehydratase FabZ (145 aa).

Histidine 49 is a catalytic residue.

This sequence belongs to the thioester dehydratase family. FabZ subfamily.

It is found in the cytoplasm. The catalysed reaction is a (3R)-hydroxyacyl-[ACP] = a (2E)-enoyl-[ACP] + H2O. Its function is as follows. Involved in unsaturated fatty acids biosynthesis. Catalyzes the dehydration of short chain beta-hydroxyacyl-ACPs and long chain saturated and unsaturated beta-hydroxyacyl-ACPs. This Rickettsia bellii (strain RML369-C) protein is 3-hydroxyacyl-[acyl-carrier-protein] dehydratase FabZ.